The primary structure comprises 363 residues: Putative F-box protein At4g22170 (363 aa).

In terms of domain architecture, F-box spans 7 to 58; the sequence is PNSWSDLPHDLLNLVFERLSFANFNRARSVCSSWYSASRQSVPKNQIHWLIL.

The sequence is that of Putative F-box protein At4g22170 from Arabidopsis thaliana (Mouse-ear cress).